The chain runs to 313 residues: Putative zinc finger protein 077L (313 aa).

A C3H1-type zinc finger spans residues cysteine 174 to histidine 199. The interval serine 294–phenylalanine 313 is disordered. The segment covering aspartate 296–phenylalanine 313 has biased composition (acidic residues).

Belongs to the IIV-6 077L family.

The sequence is that of Putative zinc finger protein 077L from Invertebrate iridescent virus 6 (IIV-6).